Consider the following 349-residue polypeptide: Guanine nucleotide-binding protein-like alpha-10 subunit (349 aa).

Residues 33–349 (EEIRVLIYGQ…LNITYNSVKN (317 aa)) form the G-alpha domain. The G1 motif stretch occupies residues 36–49 (RVLIYGQKKVGVTT). The segment at 168 to 176 (DLNFIKLTQ) is G2 motif. The segment at 191-200 (IKMIEMGIQT) is G3 motif. GTP contacts are provided by residues 195-199 (EMGIQ) and 266-269 (NKKD). Positions 262-269 (IVFFNKKD) are G4 motif. The interval 320–325 (NEESEV) is G5 motif.

The protein belongs to the G-alpha family.

The chain is Guanine nucleotide-binding protein-like alpha-10 subunit (gpaJ) from Dictyostelium discoideum (Social amoeba).